Consider the following 960-residue polypeptide: Putative helicase L207/L206 (960 aa).

Positions 1 to 32 are disordered; it reads MTSKTENKKSVSSKTGRTTNNSTNKKTTEKSV. Over residues 12 to 25 the composition is skewed to low complexity; that stretch reads SSKTGRTTNNSTNK. The region spanning 646–807 is the SF3 helicase domain; sequence SMREYILTLL…FIKHSEATKK (162 aa).

This is Putative helicase L207/L206 from Acanthamoeba polyphaga mimivirus (APMV).